Consider the following 227-residue polypeptide: Phosphoribosylformylglycinamidine synthase subunit PurQ (227 aa).

In terms of domain architecture, Glutamine amidotransferase type-1 spans 3 to 225; that stretch reads FAVIVFPGSN…LRNWRESHVV (223 aa). The active-site Nucleophile is Cys-86. Residues His-194 and Glu-196 contribute to the active site.

Part of the FGAM synthase complex composed of 1 PurL, 1 PurQ and 2 PurS subunits.

The protein localises to the cytoplasm. It carries out the reaction N(2)-formyl-N(1)-(5-phospho-beta-D-ribosyl)glycinamide + L-glutamine + ATP + H2O = 2-formamido-N(1)-(5-O-phospho-beta-D-ribosyl)acetamidine + L-glutamate + ADP + phosphate + H(+). The enzyme catalyses L-glutamine + H2O = L-glutamate + NH4(+). Its pathway is purine metabolism; IMP biosynthesis via de novo pathway; 5-amino-1-(5-phospho-D-ribosyl)imidazole from N(2)-formyl-N(1)-(5-phospho-D-ribosyl)glycinamide: step 1/2. Its function is as follows. Part of the phosphoribosylformylglycinamidine synthase complex involved in the purines biosynthetic pathway. Catalyzes the ATP-dependent conversion of formylglycinamide ribonucleotide (FGAR) and glutamine to yield formylglycinamidine ribonucleotide (FGAM) and glutamate. The FGAM synthase complex is composed of three subunits. PurQ produces an ammonia molecule by converting glutamine to glutamate. PurL transfers the ammonia molecule to FGAR to form FGAM in an ATP-dependent manner. PurS interacts with PurQ and PurL and is thought to assist in the transfer of the ammonia molecule from PurQ to PurL. The sequence is that of Phosphoribosylformylglycinamidine synthase subunit PurQ from Halalkalibacterium halodurans (strain ATCC BAA-125 / DSM 18197 / FERM 7344 / JCM 9153 / C-125) (Bacillus halodurans).